A 409-amino-acid chain; its full sequence is Galactosylgalactosylxylosylprotein 3-beta-glucuronosyltransferase S (409 aa).

Residues 1-45 form a disordered region; that stretch reads MSSARLLESQTSDEDNEDIERRPHQSHSRSCSNNTTPTHPPHPMV. Residues 1–53 are Cytoplasmic-facing; that stretch reads MSSARLLESQTSDEDNEDIERRPHQSHSRSCSNNTTPTHPPHPMVRKGGVARR. Ser-9 carries the phosphoserine modification. Thr-11 is subject to Phosphothreonine. Phosphoserine is present on residues Ser-12 and Ser-32. Residues 54–73 traverse the membrane as a helical; Signal-anchor for type II membrane protein segment; the sequence is ICLIGGALFLLLVALCYLTL. Topologically, residues 74-409 are lumenal; sequence SGDTRLGGSE…RENPHSKILS (336 aa). N-linked (GlcNAc...) asparagine glycosylation is found at Asn-102 and Asn-223. Asp-235 contributes to the Mn(2+) binding site. The active-site Proton acceptor is the Glu-318. Residue Asn-338 is glycosylated (N-linked (GlcNAc...) asparagine). A disordered region spans residues 389–409; the sequence is EGRNALISKNGRENPHSKILS. The span at 398 to 409 shows a compositional bias: basic and acidic residues; sequence NGRENPHSKILS.

It belongs to the glycosyltransferase 43 family. Mn(2+) serves as cofactor.

It is found in the golgi apparatus membrane. The catalysed reaction is 3-O-(beta-D-galactosyl-(1-&gt;3)-beta-D-galactosyl-(1-&gt;4)-beta-D-xylosyl)-L-seryl-[protein] + UDP-alpha-D-glucuronate = 3-O-(beta-D-GlcA-(1-&gt;3)-beta-D-Gal-(1-&gt;3)-beta-D-Gal-(1-&gt;4)-beta-D-Xyl)-L-seryl-[protein] + UDP + H(+). It functions in the pathway protein modification; protein glycosylation. Involved in the biosynthesis of L2/HNK-1 carbohydrate epitope on both glycolipids and glycoproteins. Enzyme has a broad specificity. The polypeptide is Galactosylgalactosylxylosylprotein 3-beta-glucuronosyltransferase S (GlcAT-S) (Drosophila melanogaster (Fruit fly)).